A 183-amino-acid polypeptide reads, in one-letter code: MSDVEIKVENIVASATLGKSLELPKIAPALENVEYNLEQFPGLVFKLKDPKTAALIFGSGKLVCTGAKCIEDSIKAIHMTVDKIRELDTEIPEEFEIKIQNIVASANLGKVLNLEAVALDLENTEYEPEQFPGLVYRLSDPKVVLLLFGSGKVVCTGAKTADQALLGVQKTKERLIELYLIEE.

2 consecutive repeat copies span residues Val-8–Ile-84 and Ile-99–Leu-175.

The protein belongs to the TBP family.

Its function is as follows. General factor that plays a role in the activation of archaeal genes transcribed by RNA polymerase. Binds specifically to the TATA box promoter element which lies close to the position of transcription initiation. This is TATA-box-binding protein from Methanosphaera stadtmanae (strain ATCC 43021 / DSM 3091 / JCM 11832 / MCB-3).